Reading from the N-terminus, the 32-residue chain is Corticostatin-related peptide RK-1 (32 aa).

Cystine bridges form between cysteine 3–cysteine 29, cysteine 5–cysteine 19, and cysteine 9–cysteine 28.

It is found in the secreted. Its function is as follows. Has antimicrobial activity against E.coli and activates ion channel activity. This is Corticostatin-related peptide RK-1 from Oryctolagus cuniculus (Rabbit).